The primary structure comprises 83 residues: Lipolysis-activating peptide 1-alpha chain (83 aa).

The N-terminal stretch at 1-21 is a signal peptide; that stretch reads MNIILFYFMPILISLPGLLAS. One can recognise an LCN-type CS-alpha/beta domain in the interval 22–83; that stretch reads GTYPNDVYGL…LFWDVYKEHC (62 aa). Disulfide bonds link Cys35–Cys58, Cys44–Cys63, and Cys48–Cys65.

The protein belongs to the long (3 C-C) scorpion toxin superfamily. Monomer (edited version) and heterodimer (non-edited version) of this alpha chain and a beta chain (AC P0CI43). As to expression, expressed by the venom gland.

The protein localises to the secreted. Functionally, the heterodimer non-edited LVP1 induces lipolysis in rat adipocytes. Induction of lipolysis by LVP1 appears to be mediated through the beta-2 adrenergic receptor pathway (ADRB2). Its function is as follows. The edited BmKBTx-like, similar to beta-toxins, may modulate voltage-gated sodium channels (Nav) and may block voltage-gated potassium channels (Kv). In Lychas mucronatus (Chinese swimming scorpion), this protein is Lipolysis-activating peptide 1-alpha chain.